The following is a 583-amino-acid chain: MSLWELEDRRSCQGTPRPAQEPTAEEATTAELQMKVDFFRKLGYSSAEIHSVLQKLGIQADTNTVLGELVKHGSAAERERQASPDPCPQLPLVPRGGGTPKAPTVETYPPEEDKEGSDLRPIVIDGSNVAMSHGNKDVFSCRGILLAVNWFLERGHTDITVFVPSWRKEQPRPDVPITDQHILRDLEKKKILVFTPSRRVGGKRVVCYDDRFIVKLAFESDGIVVSNDTYRDLQGERQEWKRFIEERLLMYSFVNDKFMPPDDPLGRHGPSLDNFLRKKPLTSEHKKQPCPYGRKCTYGIKCRFLHPERPSRPQRSVADELRANALLPPSRAASKDKNSRRPSPSSQPGSLPTEHEQCSPDRKKLGAQASPGTPREGLMQTFAPTGRSLPPSGSSGGSFGPSEWFPQTLDSLPYASQDCLDSGIGSLESQMSELWGVRGGGPGEPGPPRGPYAGYCTYGAELPATPAFSAFSRALGAGHFSVPADYAPPPAAFPPREYWSEPYQLPPPTQRLQEPQAPGPGADRGPWGGAGRLAKERASVYTKLCGVFPPHLVEAVMSRFPQLLDPQQLAAEILSYKSQHLSE.

Basic and acidic residues predominate over residues 1–11 (MSLWELEDRRS). Disordered stretches follow at residues 1-29 (MSLWELEDRRSCQGTPRPAQEPTAEEATT) and 73-119 (GSAA…GSDL). Low complexity predominate over residues 15-29 (TPRPAQEPTAEEATT). A ubiquitin association domain region spans residues 26–71 (EATTAELQMKVDFFRKLGYSSAEIHSVLQKLGIQADTNTVLGELVK). The interval 65-134 (VLGELVKHGS…DGSNVAMSHG (70 aa)) is necessary for interaction with TANK. Over residues 73-82 (GSAAERERQA) the composition is skewed to basic and acidic residues. Residue Ser-83 is modified to Phosphoserine. The RNase stretch occupies residues 96-281 (GGGTPKAPTV…LDNFLRKKPL (186 aa)). An RNase NYN domain is found at 119 to 274 (LRPIVIDGSN…LGRHGPSLDN (156 aa)). Residues 198–204 (RRVGGKR) form an RNA binding region. Residue Asp-210 coordinates Mg(2+). Disordered stretches follow at residues 262–290 (DDPLGRHGPSLDNFLRKKPLTSEHKKQPC) and 323–404 (ANAL…PSEW). A C3H1-type zinc finger spans residues 284–309 (EHKKQPCPYGRKCTYGIKCRFLHPER). The tract at residues 285–441 (HKKQPCPYGR…SELWGVRGGG (157 aa)) is necessary for interaction with ZC3H12D. The segment covering 341-352 (RPSPSSQPGSLP) has biased composition (low complexity). A compositionally biased stretch (basic and acidic residues) spans 353–364 (TEHEQCSPDRKK). Positions 384 to 393 (PTGRSLPPSG) are enriched in low complexity. Residues Ser-422 and Ser-426 each carry the phosphoserine modification. The segment at 503-530 (YQLPPPTQRLQEPQAPGPGADRGPWGGA) is disordered.

The protein belongs to the ZC3H12 family. Oligomer. Found in a deubiquitination complex with TANK, USP10 and ZC3H12A; this complex inhibits genotoxic stress- or interleukin-1-beta-mediated NF-kappaB activation by promoting IKBKG or TRAF6 deubiquitination. Interacts with IKBKG; this interaction increases in response to DNA damage. Interacts with TANK; this interaction increases in response to DNA damage and serves as a bridge to anchor both TANK and USP10 into a deubiquitinating complex. Interacts with TRAF6; this interaction increases in response to DNA damage and is stimulated by TANK. Interacts with USP10; this interaction increases in response to DNA damage and serves as a bridge to anchor both TANK and USP10 into a deubiquitinating complex. Interacts with ZC3H12D. Interacts with TNRC6A. Interacts with IKBKB/IKKB. Interacts with IKBKB/IKKB. Interacts with BTRC; the interaction occurs when ZC3H12A is phosphorylated in a IKBKB/IKKB-dependent manner. Interacts with IRAK1; this interaction increases the interaction between ZC3H12A and IKBKB/IKKB. Interacts with UPF1; this interaction occurs in a mRNA translationally active- and termination-dependent manner and is essential for ZC3H12A-mediated degradation of target mRNAs. Associates with ribosomes. Interacts with ubiquitin. It depends on Mg(2+) as a cofactor. In terms of processing, phosphorylated by IRAK1; phosphorylation is necessary for subsequent phosphorylation by the I-kappa-B-kinase (IKK) complex. Phosphorylated by I-kappa-B-kinase (IKK) subunits IKBKB/IKKB and CHUK/IKKA at Ser-422 and Ser-426; these phosphorylations promote ubiquitin proteasome-mediated degradation of ZC3H12A and hence facilitates rapid and robust production of IL-6 mRNA in response to toll-like receptor (TLR) or IL-1 receptor stimuli. Post-translationally, ubiquitinated; ubiquitination is induced in response to interleukin IL1 receptor stimuli in a IKBKB/IKKB and IRAK1-dependent manner, leading to proteasome-mediated degradation. Proteolytically cleaved between Arg-95 and Arg-198 by MALT1 in activated T-cells; cleavage at Arg-95 is critical for promoting ZC3H12A degradation in response to T-cell receptor (TCR) stimulation, and hence is necessary for prolonging the stability of a set of mRNAs controlling T-cell activation and Th17 cell differentiation.

It localises to the nucleus. The protein localises to the cytoplasm. The protein resides in the P-body. Its subcellular location is the rough endoplasmic reticulum membrane. It is found in the cytoplasmic granule. In terms of biological role, endoribonuclease involved in various biological functions such as cellular inflammatory response and immune homeostasis, glial differentiation of neuroprogenitor cells, cell death of cardiomyocytes, adipogenesis and angiogenesis. Functions as an endoribonuclease involved in mRNA decay. Modulates the inflammatory response by promoting the degradation of a set of translationally active cytokine-induced inflammation-related mRNAs, such as IL6 and IL12B, during the early phase of inflammation. Prevents aberrant T-cell-mediated immune reaction by degradation of multiple mRNAs controlling T-cell activation, such as those encoding cytokines (IL6 and IL2), cell surface receptors (ICOS, TNFRSF4 and TNFR2) and transcription factor (REL). Inhibits cooperatively with ZC3H12A the differentiation of helper T cells Th17 in lungs. They repress target mRNA encoding the Th17 cell-promoting factors IL6, ICOS, REL, IRF4, NFKBID and NFKBIZ. The cooperation requires RNA-binding by RC3H1 and the nuclease activity of ZC3H12A. Together with RC3H1, destabilizes TNFRSF4/OX40 mRNA by binding to the conserved stem loop structure in its 3'UTR. Self regulates by destabilizing its own mRNA. Cleaves mRNA harboring a stem-loop (SL), often located in their 3'-UTRs, during the early phase of inflammation in a helicase UPF1-dependent manner. Plays a role in the inhibition of microRNAs (miRNAs) biogenesis. Cleaves the terminal loop of a set of precursor miRNAs (pre-miRNAs) important for the regulation of the inflammatory response leading to their degradation, and thus preventing the biosynthesis of mature miRNAs. Also plays a role in promoting angiogenesis in response to inflammatory cytokines by inhibiting the production of antiangiogenic microRNAs via its anti-dicer RNase activity. Affects the overall ubiquitination of cellular proteins. Positively regulates deubiquitinase activity promoting the cleavage at 'Lys-48'- and 'Lys-63'-linked polyubiquitin chains on TNF receptor-associated factors (TRAFs), preventing JNK and NF-kappa-B signaling pathway activation, and hence negatively regulating macrophage-mediated inflammatory response and immune homeostasis. Also induces deubiquitination of the transcription factor HIF1A, probably leading to its stabilization and nuclear import, thereby positively regulating the expression of proangiogenic HIF1A-targeted genes. Involved in a TANK-dependent negative feedback response to attenuate NF-kappaB activation through the deubiquitination of IKBKG or TRAF6 in response to interleukin-1-beta (IL1B) stimulation or upon DNA damage. Prevents stress granules (SGs) formation and promotes macrophage apoptosis under stress conditions, including arsenite-induced oxidative stress, heat shock, and energy deprivation. Plays a role in the regulation of macrophage polarization; promotes IL4-induced polarization of macrophages M1 into anti-inflammatory M2 state. May also act as a transcription factor that regulates the expression of multiple genes involved in inflammatory response, angiogenesis, adipogenesis and apoptosis. Functions as a positive regulator of glial differentiation of neuroprogenitor cells through an amyloid precursor protein (APP)-dependent signaling pathway. Attenuates septic myocardial contractile dysfunction in response to lipopolysaccharide (LPS) by reducing I-kappa-B-kinase (IKK)-mediated NF-kappa-B activation, and hence myocardial pro-inflammatory cytokine production. The sequence is that of Ribonuclease ZC3H12A from Bos taurus (Bovine).